The primary structure comprises 330 residues: 5-dehydro-2-deoxygluconokinase (330 aa).

It belongs to the carbohydrate kinase PfkB family.

It carries out the reaction 5-dehydro-2-deoxy-D-gluconate + ATP = 6-phospho-5-dehydro-2-deoxy-D-gluconate + ADP + H(+). It functions in the pathway polyol metabolism; myo-inositol degradation into acetyl-CoA; acetyl-CoA from myo-inositol: step 5/7. In terms of biological role, catalyzes the phosphorylation of 5-dehydro-2-deoxy-D-gluconate (2-deoxy-5-keto-D-gluconate or DKG) to 6-phospho-5-dehydro-2-deoxy-D-gluconate (DKGP). In Bacillus velezensis (strain DSM 23117 / BGSC 10A6 / LMG 26770 / FZB42) (Bacillus amyloliquefaciens subsp. plantarum), this protein is 5-dehydro-2-deoxygluconokinase.